A 357-amino-acid polypeptide reads, in one-letter code: Dihydroorotate dehydrogenase (quinone) (357 aa).

FMN is bound by residues 66-70 (AGFDK) and Thr90. Residue Lys70 coordinates substrate. Residue 115–119 (NRMGF) participates in substrate binding. Residues Asn143 and Asn176 each coordinate FMN. Asn176 lines the substrate pocket. The active-site Nucleophile is the Ser179. Asn181 contacts substrate. FMN-binding residues include Lys212 and Thr240. Residue 241–242 (NT) participates in substrate binding. FMN is bound by residues Gly264, Gly293, and 314-315 (YT).

This sequence belongs to the dihydroorotate dehydrogenase family. Type 2 subfamily. In terms of assembly, monomer. FMN serves as cofactor.

The protein localises to the cell membrane. It carries out the reaction (S)-dihydroorotate + a quinone = orotate + a quinol. It participates in pyrimidine metabolism; UMP biosynthesis via de novo pathway; orotate from (S)-dihydroorotate (quinone route): step 1/1. Its function is as follows. Catalyzes the conversion of dihydroorotate to orotate with quinone as electron acceptor. The polypeptide is Dihydroorotate dehydrogenase (quinone) (Mycobacterium bovis (strain BCG / Pasteur 1173P2)).